Consider the following 504-residue polypeptide: Cytochrome P450 3A1 (504 aa).

C443 is a binding site for heme.

The protein belongs to the cytochrome P450 family. Requires heme as cofactor.

It localises to the endoplasmic reticulum membrane. The protein localises to the microsome membrane. It carries out the reaction an organic molecule + reduced [NADPH--hemoprotein reductase] + O2 = an alcohol + oxidized [NADPH--hemoprotein reductase] + H2O + H(+). Functionally, cytochromes P450 are a group of heme-thiolate monooxygenases. In liver microsomes, this enzyme is involved in an NADPH-dependent electron transport pathway. It oxidizes a variety of structurally unrelated compounds, including steroids, fatty acids, and xenobiotics. The protein is Cytochrome P450 3A1 (Cyp3a1) of Rattus norvegicus (Rat).